The primary structure comprises 62 residues: Photosystem II reaction center protein Z (62 aa).

The next 2 membrane-spanning stretches (helical) occupy residues threonine 8–alanine 28 and phenylalanine 41–isoleucine 61.

It belongs to the PsbZ family. PSII is composed of 1 copy each of membrane proteins PsbA, PsbB, PsbC, PsbD, PsbE, PsbF, PsbH, PsbI, PsbJ, PsbK, PsbL, PsbM, PsbT, PsbY, PsbZ, Psb30/Ycf12, at least 3 peripheral proteins of the oxygen-evolving complex and a large number of cofactors. It forms dimeric complexes.

It localises to the plastid. It is found in the chloroplast thylakoid membrane. Its function is as follows. May control the interaction of photosystem II (PSII) cores with the light-harvesting antenna, regulates electron flow through the 2 photosystem reaction centers. PSII is a light-driven water plastoquinone oxidoreductase, using light energy to abstract electrons from H(2)O, generating a proton gradient subsequently used for ATP formation. The protein is Photosystem II reaction center protein Z of Welwitschia mirabilis (Tree tumbo).